The primary structure comprises 102 residues: MAKEKIRIRLKAYDHRILDQSAEKIVETAKRSGAKVSGPIPLPTERTVYTILRAVHKYKDSREQFEMRTHKRLIDIINPTPQTVDSLMRLDLPSGVDIEIKL.

It belongs to the universal ribosomal protein uS10 family. As to quaternary structure, part of the 30S ribosomal subunit.

Its function is as follows. Involved in the binding of tRNA to the ribosomes. This is Small ribosomal subunit protein uS10 from Geobacillus kaustophilus (strain HTA426).